Consider the following 502-residue polypeptide: 9-beta-pimara-7,15-diene oxidase (502 aa).

The next 2 helical transmembrane spans lie at 4-26 (INSE…ALLT) and 106-128 (LLVS…GAYW). Residue Cys438 coordinates heme.

It belongs to the cytochrome P450 family. It depends on heme as a cofactor.

Its subcellular location is the membrane. It carries out the reaction 9beta-pimara-7,15-diene + 3 reduced [NADPH--hemoprotein reductase] + 3 O2 = 9beta-pimara-7,15-dien-19-oate + 3 oxidized [NADPH--hemoprotein reductase] + 4 H2O + 4 H(+). Involved in momilactone phytoalexins biosynthesis; acts as a multifunctional diterpene oxidase. Participates in the biosynthetic steps between 9-beta-pimara-7,15-diene and 3-beta-hydroxy-9-beta-pimara-7,15-dien-19,6-beta-olide. Also catalyzes consecutive oxidations at C19 of syn-stemod-13(17)-ene. In Oryza sativa subsp. japonica (Rice), this protein is 9-beta-pimara-7,15-diene oxidase (CYP99A3).